The following is a 104-amino-acid chain: Large ribosomal subunit protein uL24 (104 aa).

This sequence belongs to the universal ribosomal protein uL24 family. In terms of assembly, part of the 50S ribosomal subunit.

In terms of biological role, one of two assembly initiator proteins, it binds directly to the 5'-end of the 23S rRNA, where it nucleates assembly of the 50S subunit. Functionally, one of the proteins that surrounds the polypeptide exit tunnel on the outside of the subunit. This Klebsiella pneumoniae (strain 342) protein is Large ribosomal subunit protein uL24.